The primary structure comprises 502 residues: Maturase K (502 aa).

This sequence belongs to the intron maturase 2 family. MatK subfamily.

The protein resides in the plastid. The protein localises to the chloroplast. In terms of biological role, usually encoded in the trnK tRNA gene intron. Probably assists in splicing its own and other chloroplast group II introns. The polypeptide is Maturase K (Arabis blepharophylla (Coast rock-cress)).